The primary structure comprises 309 residues: Taste receptor type 2 member 64 (309 aa).

Residues M1–Y3 are Extracellular-facing. A helical transmembrane segment spans residues F4–F26. The Cytoplasmic portion of the chain corresponds to V27 to Q46. A helical transmembrane segment spans residues I47 to N69. Topologically, residues V70–V83 are extracellular. Residues A84–Y106 form a helical membrane-spanning segment. Residues L107–R126 lie on the Cytoplasmic side of the membrane. Residues S127–M149 form a helical membrane-spanning segment. The Extracellular portion of the chain corresponds to D150–D176. An N-linked (GlcNAc...) asparagine glycan is attached at N161. A helical membrane pass occupies residues L177–I199. Residues C200 to T230 are Cytoplasmic-facing. A helical membrane pass occupies residues V231 to W253. At T254–K258 the chain is on the extracellular side. The helical transmembrane segment at L259–M281 threads the bilayer. The Cytoplasmic portion of the chain corresponds to G282–P309.

This sequence belongs to the G-protein coupled receptor T2R family.

The protein localises to the membrane. Its function is as follows. Receptor that may play a role in the perception of bitterness and is gustducin-linked. May play a role in sensing the chemical composition of the gastrointestinal content. The activity of this receptor may stimulate alpha gustducin, mediate PLC-beta-2 activation and lead to the gating of TRPM5. This is Taste receptor type 2 member 64 (TAS2R64) from Pan paniscus (Pygmy chimpanzee).